The following is a 247-amino-acid chain: DNA repair protein RecO (247 aa).

It belongs to the RecO family.

Functionally, involved in DNA repair and RecF pathway recombination. The polypeptide is DNA repair protein RecO (Methylocella silvestris (strain DSM 15510 / CIP 108128 / LMG 27833 / NCIMB 13906 / BL2)).